The primary structure comprises 163 residues: Nucleotide-binding protein Pnap_1080 (163 aa).

Belongs to the YajQ family.

Its function is as follows. Nucleotide-binding protein. This Polaromonas naphthalenivorans (strain CJ2) protein is Nucleotide-binding protein Pnap_1080.